The following is a 222-amino-acid chain: VDGEQLEAAHQALREAVADCQRAGKRTLVLGGGHETAFGHGAGVLDAFPGEKVGIINLDAHLDLRFADCASSGTPFRQLALECDAQQRGFHYTCIGVSRAANTQALWDEAARRQVAIVEDLEVLTAFETRVLPELERNIAQFDRLYLTIDLDVLPAREMPAVSAPAALGVPLGTLLRIVEPLCRSGKLQAVDLVEFNPLFDIDGQGARAAARVAWQIAHWWR.

Positions 34, 59, 61, 63, 150, and 152 each coordinate Mn(2+).

The protein belongs to the arginase family. It depends on Mn(2+) as a cofactor.

It catalyses the reaction N-formimidoyl-L-glutamate + H2O = formamide + L-glutamate. It participates in amino-acid degradation; L-histidine degradation into L-glutamate; L-glutamate from N-formimidoyl-L-glutamate (hydrolase route): step 1/1. Catalyzes the conversion of N-formimidoyl-L-glutamate to L-glutamate and formamide. In Klebsiella aerogenes (Enterobacter aerogenes), this protein is Formimidoylglutamase (hutG).